The sequence spans 379 residues: Cobalt-precorrin-5B C(1)-methyltransferase (379 aa).

Belongs to the CbiD family.

It catalyses the reaction Co-precorrin-5B + S-adenosyl-L-methionine = Co-precorrin-6A + S-adenosyl-L-homocysteine. The protein operates within cofactor biosynthesis; adenosylcobalamin biosynthesis; cob(II)yrinate a,c-diamide from sirohydrochlorin (anaerobic route): step 6/10. Its function is as follows. Catalyzes the methylation of C-1 in cobalt-precorrin-5B to form cobalt-precorrin-6A. The chain is Cobalt-precorrin-5B C(1)-methyltransferase from Cyanothece sp. (strain PCC 7425 / ATCC 29141).